The following is a 1394-amino-acid chain: Adhesion and penetration protein autotransporter (1394 aa).

A signal peptide spans 1–25; it reads MKKTVFRLNFLTACISLGIVSQAWA. The Peptidase S6 domain maps to 26 to 286; sequence GHTYFGIDYQ…QLVRKSYFDE (261 aa). The active site involves serine 243. Disordered regions lie at residues 848–870 and 995–1027; these read AYSA…TPTS and TLEA…FPDT. Positions 1140–1394 constitute an Autotransporter domain; that stretch reads VDQAQSAVWT…NVGVKLGYRW (255 aa).

It localises to the periplasm. The protein resides in the secreted. The protein localises to the cell surface. Its subcellular location is the cell outer membrane. Probable protease; promotes adherence and invasion by directly binding to a host cell structure. The protein is Adhesion and penetration protein autotransporter (hap) of Haemophilus influenzae.